Reading from the N-terminus, the 277-residue chain is S-formylglutathione hydrolase FrmB (277 aa).

Catalysis depends on charge relay system residues S145, D221, and H254.

The protein belongs to the esterase D family.

The enzyme catalyses S-formylglutathione + H2O = formate + glutathione + H(+). Functionally, serine hydrolase involved in the detoxification of formaldehyde. Hydrolyzes S-formylglutathione to glutathione and formate. This Escherichia coli O9:H4 (strain HS) protein is S-formylglutathione hydrolase FrmB (frmB).